Reading from the N-terminus, the 381-residue chain is GDP-mannose-dependent alpha-(1-6)-phosphatidylinositol dimannoside mannosyltransferase (381 aa).

Substrate contacts are provided by residues Gly16, Arg207, 211–212, 283–287, and Glu291; these read EK and ETFGL.

It belongs to the glycosyltransferase group 1 family. Glycosyltransferase 4 subfamily.

It participates in phospholipid metabolism; phosphatidylinositol metabolism. Catalyzes the addition of a mannose residue from GDP-D-mannose to the position 6 of the alpha-1,6-linked mannose residue of the triacyl phosphatidylinositol dimannoside (Ac3PIM2) to generate triacyl phosphatidylinositol trimannoside (Ac3PIM3). The chain is GDP-mannose-dependent alpha-(1-6)-phosphatidylinositol dimannoside mannosyltransferase (pimC) from Mycobacterium tuberculosis (strain ATCC 25177 / H37Ra).